The following is a 432-amino-acid chain: Glutamate-1-semialdehyde 2,1-aminomutase 1 (432 aa).

Lys272 is modified (N6-(pyridoxal phosphate)lysine).

It belongs to the class-III pyridoxal-phosphate-dependent aminotransferase family. HemL subfamily. Homodimer. The cofactor is pyridoxal 5'-phosphate.

The protein resides in the cytoplasm. The catalysed reaction is (S)-4-amino-5-oxopentanoate = 5-aminolevulinate. Its pathway is porphyrin-containing compound metabolism; protoporphyrin-IX biosynthesis; 5-aminolevulinate from L-glutamyl-tRNA(Glu): step 2/2. The chain is Glutamate-1-semialdehyde 2,1-aminomutase 1 from Exiguobacterium sibiricum (strain DSM 17290 / CCUG 55495 / CIP 109462 / JCM 13490 / 255-15).